The chain runs to 462 residues: MILGPDGILNRDTRGDWWRLRTLILLRWMAVAGQLAAIVVTDWYLGVRLPMGLCFMAVGASVIANVIATFVFPQNRRLTEFQALMILLFDLTQLSFLLFLTGGLTNPFALLILAPVTISGVALDVRTTVILGAIAIGLLTFTAYFHLPLILADGSSLSVPRMFEFGFWLAIVIGILFLGLYSRRVAIEIRSMSDALLATQMALDREQKLTDLGGVVAAAAHELGTPLATIKLVSSELAEELSEQPALRDDADVIREQADRCRDILRSMGRAGKDDLQMRQGPLGEVLREAAEPHVGRGKRVEFDLYPSRGGDERQPVILRRPEVIHGVRNLIQNAVDFARSTVWIDGEWTGDRIAIRIVDDGEGYPPAIIGRIGDPFVRQRRAEESQSRRPGYEGMGLGLFIAKTLLERSGAELSFANAADPFLRSHERPERCGAIVEVIWPVDRLVVVRNAPLGENVLIQT.

Residues 1-25 (MILGPDGILNRDTRGDWWRLRTLIL) are Cytoplasmic-facing. The helical transmembrane segment at 26–45 (LRWMAVAGQLAAIVVTDWYL) threads the bilayer. Residues 46-51 (GVRLPM) lie on the Extracellular side of the membrane. A helical membrane pass occupies residues 52–70 (GLCFMAVGASVIANVIATF). At 71-78 (VFPQNRRL) the chain is on the cytoplasmic side. A helical transmembrane segment spans residues 79-96 (TEFQALMILLFDLTQLSF). At 97-103 (LLFLTGG) the chain is on the extracellular side. Residues 104-123 (LTNPFALLILAPVTISGVAL) form a helical membrane-spanning segment. Residues 124–129 (DVRTTV) lie on the Cytoplasmic side of the membrane. The helical transmembrane segment at 130 to 149 (ILGAIAIGLLTFTAYFHLPL) threads the bilayer. Residues 150–164 (ILADGSSLSVPRMFE) lie on the Extracellular side of the membrane. The chain crosses the membrane as a helical span at residues 165–182 (FGFWLAIVIGILFLGLYS). Residues 183–462 (RRVAIEIRSM…PLGENVLIQT (280 aa)) lie on the Cytoplasmic side of the membrane. Residues 218-445 (AAAHELGTPL…IVEVIWPVDR (228 aa)) enclose the Histidine kinase domain. H221 carries the phosphohistidine; by autocatalysis modification.

The protein resides in the cell inner membrane. It carries out the reaction ATP + protein L-histidine = ADP + protein N-phospho-L-histidine.. Functionally, member of the two-component regulatory system RegB/RegA. Involved in the positive regulation of photosynthesis gene expression in response to anaerobiosis. Also involved in positive regulation of the cbbI and cbbII Calvin cycle CO2 fixation operons, as well as in regulation of expression of genes involved in alternative CO2 fixation pathways. Phosphorylates RegA/PrrA. The protein is Sensor histidine kinase RegB (regB) of Cereibacter sphaeroides (Rhodobacter sphaeroides).